Reading from the N-terminus, the 309-residue chain is Homoserine O-succinyltransferase (309 aa).

The Acyl-thioester intermediate role is filled by Cys-142. The substrate site is built by Lys-163 and Ser-192. The active-site Proton acceptor is His-235. Glu-237 is an active-site residue. Position 249 (Arg-249) interacts with substrate.

This sequence belongs to the MetA family. As to quaternary structure, homodimer.

Its subcellular location is the cytoplasm. It carries out the reaction L-homoserine + succinyl-CoA = O-succinyl-L-homoserine + CoA. It functions in the pathway amino-acid biosynthesis; L-methionine biosynthesis via de novo pathway; O-succinyl-L-homoserine from L-homoserine: step 1/1. Its function is as follows. Transfers a succinyl group from succinyl-CoA to L-homoserine, forming succinyl-L-homoserine. The protein is Homoserine O-succinyltransferase of Escherichia coli O139:H28 (strain E24377A / ETEC).